The sequence spans 178 residues: MGDPRRLGKKYDTPNHPWIGERIQSEKEISQKYGLVNKKELWKMETQLRNYRRQARKLISDTTTQGGKEAVQLFNVLKRYAILVESEPTLDHVLSLNIESILERRLQTIVYRKGLAKTAKQARQFIVHGHIAVNGKRVTAPAYLVSVAENDAIEYVPNSPMASENHPERTAAVSEENQ.

The S4 RNA-binding domain maps to 104–166 (RRLQTIVYRK…PNSPMASENH (63 aa)). Residues 158–178 (NSPMASENHPERTAAVSEENQ) are disordered.

This sequence belongs to the universal ribosomal protein uS4 family. Part of the 30S ribosomal subunit. Contacts protein S5. The interaction surface between S4 and S5 is involved in control of translational fidelity.

Functionally, one of the primary rRNA binding proteins, it binds directly to 16S rRNA where it nucleates assembly of the body of the 30S subunit. With S5 and S12 plays an important role in translational accuracy. The protein is Small ribosomal subunit protein uS4 of Methanococcus maripaludis (strain C5 / ATCC BAA-1333).